The primary structure comprises 270 residues: Aquaporin-11 (270 aa).

Transmembrane regions (helical) follow at residues 5–25 (IMTM…ISIC) and 59–79 (FELG…GLFF). The short motif at 94-96 (DPS) is the NPA 1 element. Residues 120–140 (IMGAAVSYRFAKIFWSFGLMA) form a helical membrane-spanning segment. N-linked (GlcNAc...) asparagine glycosylation occurs at Asn-148. Helical transmembrane passes span 153 to 173 (ASLQ…TIVN) and 184 to 204 (MLIS…VSGG). The short motif at 207 to 209 (NPT) is the NPA 2 element. Residues 220-240 (GLSGPSFFLVYWFGPILGSSI) traverse the membrane as a helical segment.

The protein belongs to the MIP/aquaporin (TC 1.A.8) family.

Its subcellular location is the membrane. It carries out the reaction H2O(in) = H2O(out). Probable intracellular unorthodox aquaporin that may modulate the water content and osmolytes during anhydrobiosis. In Milnesium tardigradum (Water bear), this protein is Aquaporin-11.